Consider the following 728-residue polypeptide: Homoaconitase, mitochondrial (728 aa).

A mitochondrion-targeting transit peptide spans 1 to 24 (MVAIPRLARLSVPAWALSARGRFY). Cys362, Cys422, and Cys425 together coordinate [4Fe-4S] cluster.

It belongs to the aconitase/IPM isomerase family. It depends on [4Fe-4S] cluster as a cofactor.

The protein resides in the mitochondrion. It catalyses the reaction (2R,3S)-homoisocitrate = cis-homoaconitate + H2O. It participates in amino-acid biosynthesis; L-lysine biosynthesis via AAA pathway; L-alpha-aminoadipate from 2-oxoglutarate: step 3/5. Catalyzes the reversible hydration of cis-homoaconitate to (2R,3S)-homoisocitrate, a step in the alpha-aminoadipate pathway for lysine biosynthesis. This chain is Homoaconitase, mitochondrial (LYS4), found in Cryptococcus neoformans var. neoformans serotype D (strain JEC21 / ATCC MYA-565) (Filobasidiella neoformans).